We begin with the raw amino-acid sequence, 469 residues long: Neuraminidase (469 aa).

The Intravirion portion of the chain corresponds to 1–6 (MNPNQK). A helical transmembrane segment spans residues 7-27 (IITIGSICMVVGIISLILQIG). Positions 11–33 (GSICMVVGIISLILQIGNIISIW) are involved in apical transport and lipid raft association. Topologically, residues 28–469 (NIISIWISHS…GAELPFTIDK (442 aa)) are virion surface. The hypervariable stalk region stretch occupies residues 36–90 (HSIQTGSQNHTGTCNQSIITYKNSTWVNQTYVNISNTNVVAGKDTTSVILAGNSS). N-linked (GlcNAc...) asparagine; by host glycans are attached at residues Asn-44, Asn-50, Asn-58, Asn-63, Asn-68, and Asn-88. Residues 91-469 (LCPIRGWAIY…GAELPFTIDK (379 aa)) are head of neuraminidase. 8 cysteine pairs are disulfide-bonded: Cys-92-Cys-417, Cys-124-Cys-129, Cys-184-Cys-231, Cys-233-Cys-238, Cys-279-Cys-292, Cys-281-Cys-290, Cys-318-Cys-335, and Cys-421-Cys-446. Arg-118 is a binding site for substrate. The N-linked (GlcNAc...) asparagine; by host glycan is linked to Asn-146. Asp-151 functions as the Proton donor/acceptor in the catalytic mechanism. Substrate is bound at residue Arg-152. A glycan (N-linked (GlcNAc...) asparagine; by host) is linked at Asn-235. 277-278 (EE) lines the substrate pocket. Arg-293 contacts substrate. Positions 294, 298, 324, and 344 each coordinate Ca(2+). N-linked (GlcNAc...) asparagine; by host glycosylation is present at Asn-365. Position 368 (Arg-368) interacts with substrate. Tyr-402 acts as the Nucleophile in catalysis.

This sequence belongs to the glycosyl hydrolase 34 family. In terms of assembly, homotetramer. Ca(2+) serves as cofactor. N-glycosylated.

It localises to the virion membrane. Its subcellular location is the host apical cell membrane. The enzyme catalyses Hydrolysis of alpha-(2-&gt;3)-, alpha-(2-&gt;6)-, alpha-(2-&gt;8)- glycosidic linkages of terminal sialic acid residues in oligosaccharides, glycoproteins, glycolipids, colominic acid and synthetic substrates.. With respect to regulation, inhibited by the neuraminidase inhibitors zanamivir (Relenza) and oseltamivir (Tamiflu). These drugs interfere with the release of progeny virus from infected cells and are effective against all influenza strains. Resistance to neuraminidase inhibitors is quite rare. Functionally, catalyzes the removal of terminal sialic acid residues from viral and cellular glycoconjugates. Cleaves off the terminal sialic acids on the glycosylated HA during virus budding to facilitate virus release. Additionally helps virus spread through the circulation by further removing sialic acids from the cell surface. These cleavages prevent self-aggregation and ensure the efficient spread of the progeny virus from cell to cell. Otherwise, infection would be limited to one round of replication. Described as a receptor-destroying enzyme because it cleaves a terminal sialic acid from the cellular receptors. May facilitate viral invasion of the upper airways by cleaving the sialic acid moieties on the mucin of the airway epithelial cells. Likely to plays a role in the budding process through its association with lipid rafts during intracellular transport. May additionally display a raft-association independent effect on budding. Plays a role in the determination of host range restriction on replication and virulence. Sialidase activity in late endosome/lysosome traffic seems to enhance virus replication. In Aves (Human), this protein is Neuraminidase.